The primary structure comprises 497 residues: Cytoplasmic dynein 1 light intermediate chain 2 (497 aa).

61-68 serves as a coordination point for ATP; that stretch reads GEDGSGKT. Disordered regions lie at residues 187 to 206, 366 to 408, 423 to 461, and 474 to 497; these read PEEG…SGSD, QQES…IKNN, LSKK…TEQC, and QEEL…ENEA. Residues Ser-194, Ser-369, and Ser-377 each carry the phosphoserine modification. The residue at position 383 (Arg-383) is an Omega-N-methylarginine. Over residues 423-444 the composition is skewed to polar residues; the sequence is LSKKTGSPGSPSAGGVQSTAKK. Thr-427 is modified (phosphothreonine). 2 positions are modified to phosphoserine: Ser-429 and Ser-432. A compositionally biased stretch (basic and acidic residues) spans 476-485; that stretch reads ELDRMTRKPD. Positions 487–497 are enriched in polar residues; sequence MVTNSSTENEA.

This sequence belongs to the dynein light intermediate chain family. As to quaternary structure, homodimer. The cytoplasmic dynein 1 complex consists of two catalytic heavy chains (HCs) and a number of non-catalytic subunits presented by intermediate chains (ICs), light intermediate chains (LICs) and light chains (LCs); the composition seems to vary in respect to the IC, LIC and LC composition. The heavy chain homodimer serves as a scaffold for the probable homodimeric assembly of the respective non-catalytic subunits. The ICs and LICs bind directly to the HC dimer and the LCs assemble on the IC dimer. Self-associates. Interacts with DYNC1H1; DYNC1LI1 and DYNC1LI2 bind mutually exclusive to DYNC1H1. In terms of tissue distribution, ubiquitous.

The protein resides in the cytoplasm. It localises to the cytoskeleton. Its function is as follows. Acts as one of several non-catalytic accessory components of the cytoplasmic dynein 1 complex that are thought to be involved in linking dynein to cargos and to adapter proteins that regulate dynein function. Cytoplasmic dynein 1 acts as a motor for the intracellular retrograde motility of vesicles and organelles along microtubules. May play a role in binding dynein to membranous organelles or chromosomes. In Rattus norvegicus (Rat), this protein is Cytoplasmic dynein 1 light intermediate chain 2 (Dync1li2).